The chain runs to 514 residues: Maturase K (514 aa).

Belongs to the intron maturase 2 family. MatK subfamily.

The protein resides in the plastid. Its subcellular location is the chloroplast. Functionally, usually encoded in the trnK tRNA gene intron. Probably assists in splicing its own and other chloroplast group II introns. This is Maturase K from Phoenix dactylifera (Date palm).